The following is a 445-amino-acid chain: Ribosomal protein uS12 methylthiotransferase RimO (445 aa).

Positions 4 to 119 (IKVALVSLGC…LLESIKVFLK (116 aa)) constitute an MTTase N-terminal domain. Cys13, Cys48, Cys82, Cys156, Cys160, and Cys163 together coordinate [4Fe-4S] cluster. One can recognise a Radical SAM core domain in the interval 142-372 (TTPTYTAYVR…MILQQSISKD (231 aa)). The TRAM domain occupies 375–441 (KEKIGKTYEV…EYDLIGVVYN (67 aa)).

Belongs to the methylthiotransferase family. RimO subfamily. [4Fe-4S] cluster is required as a cofactor.

The protein resides in the cytoplasm. It carries out the reaction L-aspartate(89)-[ribosomal protein uS12]-hydrogen + (sulfur carrier)-SH + AH2 + 2 S-adenosyl-L-methionine = 3-methylsulfanyl-L-aspartate(89)-[ribosomal protein uS12]-hydrogen + (sulfur carrier)-H + 5'-deoxyadenosine + L-methionine + A + S-adenosyl-L-homocysteine + 2 H(+). Its function is as follows. Catalyzes the methylthiolation of an aspartic acid residue of ribosomal protein uS12. The protein is Ribosomal protein uS12 methylthiotransferase RimO of Clostridium botulinum (strain ATCC 19397 / Type A).